Reading from the N-terminus, the 109-residue chain is Guanylate cyclase activator 2B (109 aa).

The first 23 residues, 1-23 (MKVLALPVAVAAMLLVLAQNTQS), serve as a signal peptide directing secretion. Positions 24 to 94 (VYIQYEGFQV…NIFRALRSIS (71 aa)) are excised as a propeptide. 3 disulfide bridges follow: C65–C78, C98–C106, and C101–C109.

The protein belongs to the guanylin family. In terms of tissue distribution, small and large intestine and atria and ventricles of heart. Both uroguanylin and prouroguanylin are found in plasma.

The protein localises to the secreted. Functionally, endogenous activator of intestinal guanylate cyclase. It stimulates this enzyme through the same receptor binding region as the heat-stable enterotoxins. May be a potent physiological regulator of intestinal fluid and electrolyte transport. May be an autocrine/paracrine regulator of intestinal salt and water transport. The chain is Guanylate cyclase activator 2B (GUCA2B) from Didelphis virginiana (North American opossum).